Here is a 182-residue protein sequence, read N- to C-terminus: Small ribosomal subunit protein uS4c (182 aa).

An S4 RNA-binding domain is found at 82–143 (MRLDNILFRL…KQRSKALIQN (62 aa)).

Belongs to the universal ribosomal protein uS4 family. In terms of assembly, part of the 30S ribosomal subunit. Contacts protein S5. The interaction surface between S4 and S5 is involved in control of translational fidelity.

Its subcellular location is the plastid. It localises to the chloroplast. Its function is as follows. One of the primary rRNA binding proteins, it binds directly to 16S rRNA where it nucleates assembly of the body of the 30S subunit. Functionally, with S5 and S12 plays an important role in translational accuracy. This Iris domestica (Leopard lily) protein is Small ribosomal subunit protein uS4c (rps4).